Here is an 87-residue protein sequence, read N- to C-terminus: HssA/B-like protein 57 (87 aa).

It belongs to the hssA/B family.

The polypeptide is HssA/B-like protein 57 (hssl57) (Dictyostelium discoideum (Social amoeba)).